Here is a 150-residue protein sequence, read N- to C-terminus: SsrA-binding protein (150 aa).

Positions 129–150 (ETEKQRDWQREKSRIMKGGSKE) are disordered.

Belongs to the SmpB family.

Its subcellular location is the cytoplasm. Functionally, required for rescue of stalled ribosomes mediated by trans-translation. Binds to transfer-messenger RNA (tmRNA), required for stable association of tmRNA with ribosomes. tmRNA and SmpB together mimic tRNA shape, replacing the anticodon stem-loop with SmpB. tmRNA is encoded by the ssrA gene; the 2 termini fold to resemble tRNA(Ala) and it encodes a 'tag peptide', a short internal open reading frame. During trans-translation Ala-aminoacylated tmRNA acts like a tRNA, entering the A-site of stalled ribosomes, displacing the stalled mRNA. The ribosome then switches to translate the ORF on the tmRNA; the nascent peptide is terminated with the 'tag peptide' encoded by the tmRNA and targeted for degradation. The ribosome is freed to recommence translation, which seems to be the essential function of trans-translation. This is SsrA-binding protein from Cupriavidus pinatubonensis (strain JMP 134 / LMG 1197) (Cupriavidus necator (strain JMP 134)).